The chain runs to 404 residues: Probable tRNA sulfurtransferase (404 aa).

Residues 60 to 165 (QPIVEALKLV…DEAAYISYEE (106 aa)) form the THUMP domain. ATP is bound by residues 183 to 184 (ML), 208 to 209 (HF), R265, G287, and Q296.

The protein belongs to the ThiI family.

It localises to the cytoplasm. It carries out the reaction [ThiI sulfur-carrier protein]-S-sulfanyl-L-cysteine + a uridine in tRNA + 2 reduced [2Fe-2S]-[ferredoxin] + ATP + H(+) = [ThiI sulfur-carrier protein]-L-cysteine + a 4-thiouridine in tRNA + 2 oxidized [2Fe-2S]-[ferredoxin] + AMP + diphosphate. The enzyme catalyses [ThiS sulfur-carrier protein]-C-terminal Gly-Gly-AMP + S-sulfanyl-L-cysteinyl-[cysteine desulfurase] + AH2 = [ThiS sulfur-carrier protein]-C-terminal-Gly-aminoethanethioate + L-cysteinyl-[cysteine desulfurase] + A + AMP + 2 H(+). It participates in cofactor biosynthesis; thiamine diphosphate biosynthesis. Functionally, catalyzes the ATP-dependent transfer of a sulfur to tRNA to produce 4-thiouridine in position 8 of tRNAs, which functions as a near-UV photosensor. Also catalyzes the transfer of sulfur to the sulfur carrier protein ThiS, forming ThiS-thiocarboxylate. This is a step in the synthesis of thiazole, in the thiamine biosynthesis pathway. The sulfur is donated as persulfide by IscS. This Streptococcus pyogenes serotype M4 (strain MGAS10750) protein is Probable tRNA sulfurtransferase.